Here is a 398-residue protein sequence, read N- to C-terminus: Exodeoxyribonuclease 7 large subunit (398 aa).

The protein belongs to the XseA family. In terms of assembly, heterooligomer composed of large and small subunits.

It is found in the cytoplasm. The enzyme catalyses Exonucleolytic cleavage in either 5'- to 3'- or 3'- to 5'-direction to yield nucleoside 5'-phosphates.. Bidirectionally degrades single-stranded DNA into large acid-insoluble oligonucleotides, which are then degraded further into small acid-soluble oligonucleotides. This chain is Exodeoxyribonuclease 7 large subunit, found in Anaplasma phagocytophilum (strain HZ).